The sequence spans 260 residues: GDSL esterase/lipase WDL1 (260 aa).

The N-terminal stretch at 1-35 (MLGFAPAPGRPLFVLFGSSIVQFSFSNGGWGAALA) is a signal peptide. The active-site Nucleophile is the serine 18. Residues asparagine 83 and asparagine 150 are each glycosylated (N-linked (GlcNAc...) asparagine). Active-site residues include aspartate 191 and histidine 194.

Belongs to the 'GDSL' lipolytic enzyme family. Highly expressed in panicles. Expressed in shoots, mature flowers and seeds.

It localises to the endoplasmic reticulum. In terms of biological role, involved in the organization of leaf cuticle and wax crystals. The sequence is that of GDSL esterase/lipase WDL1 from Oryza sativa subsp. japonica (Rice).